The chain runs to 45 residues: Large ribosomal subunit protein bL34 (45 aa).

Residues Arg22–Val45 form a disordered region. Over residues Lys33–Val45 the composition is skewed to basic residues.

Belongs to the bacterial ribosomal protein bL34 family.

The chain is Large ribosomal subunit protein bL34 from Thermosynechococcus vestitus (strain NIES-2133 / IAM M-273 / BP-1).